Reading from the N-terminus, the 234-residue chain is Probable transcriptional regulatory protein Pfl01_3677 (234 aa).

This sequence belongs to the TACO1 family.

Its subcellular location is the cytoplasm. The protein is Probable transcriptional regulatory protein Pfl01_3677 of Pseudomonas fluorescens (strain Pf0-1).